The chain runs to 449 residues: Signal recognition particle protein (449 aa).

GTP-binding positions include 109–116 (GLQGSGKT), 191–195 (DTAGR), and 249–252 (SRID).

It belongs to the GTP-binding SRP family. SRP54 subfamily. As to quaternary structure, part of the signal recognition particle protein translocation system, which is composed of SRP and FtsY. SRP is a ribonucleoprotein composed of Ffh and a 4.5S RNA molecule.

The protein resides in the cytoplasm. The catalysed reaction is GTP + H2O = GDP + phosphate + H(+). Involved in targeting and insertion of nascent membrane proteins into the cytoplasmic membrane. Binds to the hydrophobic signal sequence of the ribosome-nascent chain (RNC) as it emerges from the ribosomes. The SRP-RNC complex is then targeted to the cytoplasmic membrane where it interacts with the SRP receptor FtsY. Interaction with FtsY leads to the transfer of the RNC complex to the Sec translocase for insertion into the membrane, the hydrolysis of GTP by both Ffh and FtsY, and the dissociation of the SRP-FtsY complex into the individual components. This chain is Signal recognition particle protein, found in Rickettsia conorii (strain ATCC VR-613 / Malish 7).